Consider the following 309-residue polypeptide: Methionyl-tRNA formyltransferase (309 aa).

109 to 112 (SLLP) lines the (6S)-5,6,7,8-tetrahydrofolate pocket.

The protein belongs to the Fmt family.

The catalysed reaction is L-methionyl-tRNA(fMet) + (6R)-10-formyltetrahydrofolate = N-formyl-L-methionyl-tRNA(fMet) + (6S)-5,6,7,8-tetrahydrofolate + H(+). In terms of biological role, attaches a formyl group to the free amino group of methionyl-tRNA(fMet). The formyl group appears to play a dual role in the initiator identity of N-formylmethionyl-tRNA by promoting its recognition by IF2 and preventing the misappropriation of this tRNA by the elongation apparatus. In Clostridium perfringens (strain 13 / Type A), this protein is Methionyl-tRNA formyltransferase.